A 182-amino-acid polypeptide reads, in one-letter code: uncharacterized protein (182 aa).

This sequence belongs to the staphylococcal tandem lipoprotein family.

This is an uncharacterized protein from Staphylococcus haemolyticus (strain JCSC1435).